A 379-amino-acid polypeptide reads, in one-letter code: Carboxypeptidase Y-deficient protein 8 (379 aa).

Residues 84-107 (HGSGNSSSKKVTSSTSSSSSNGSV) are compositionally biased toward low complexity. Positions 84 to 108 (HGSGNSSSKKVTSSTSSSSSNGSVD) are disordered. Phosphoserine is present on Ser-216.

Belongs to the VPS26 family. Component of the retromer complex which consists of VPS29, VPS26, VPS35, VPS5 and VPS17. Component of a retromer subcomplex consisting of VPS29, VPS26 and VPS35.

In terms of biological role, plays a role in vesicular protein sorting. Required for the endosome-to-Golgi retrieval of the vacuolar protein sorting receptor VPS10. Component of the membrane-associated retromer complex which is essential in endosome-to-Golgi retrograde transport. The VPS29-VPS26-VPS35 subcomplex may be involved in cargo selection. The chain is Carboxypeptidase Y-deficient protein 8 (PEP8) from Saccharomyces cerevisiae (strain ATCC 204508 / S288c) (Baker's yeast).